A 644-amino-acid polypeptide reads, in one-letter code: Exoribonuclease 2 (644 aa).

The 327-residue stretch at 190–516 folds into the RNB domain; it reads REDLTALDFI…INHRLLKALI (327 aa). Residues 562 to 644 enclose the S1 motif domain; sequence DSRFAAEIID…ENRSVIARPV (83 aa).

The protein belongs to the RNR ribonuclease family. RNase II subfamily.

Its subcellular location is the cytoplasm. It carries out the reaction Exonucleolytic cleavage in the 3'- to 5'-direction to yield nucleoside 5'-phosphates.. Its function is as follows. Involved in mRNA degradation. Hydrolyzes single-stranded polyribonucleotides processively in the 3' to 5' direction. The protein is Exoribonuclease 2 of Sodalis glossinidius (strain morsitans).